Consider the following 370-residue polypeptide: tRNA-specific 2-thiouridylase MnmA (370 aa).

Residues 14–21 (GMSGGVDS) and Met-40 each bind ATP. Residues 100–102 (NPD) are interaction with target base in tRNA. Cys-105 serves as the catalytic Nucleophile. An intrachain disulfide couples Cys-105 to Cys-205. Gly-129 contacts ATP. The interaction with tRNA stretch occupies residues 155–157 (KDQ). The Cysteine persulfide intermediate role is filled by Cys-205. Positions 321-322 (RY) are interaction with tRNA.

Belongs to the MnmA/TRMU family.

It localises to the cytoplasm. The catalysed reaction is S-sulfanyl-L-cysteinyl-[protein] + uridine(34) in tRNA + AH2 + ATP = 2-thiouridine(34) in tRNA + L-cysteinyl-[protein] + A + AMP + diphosphate + H(+). Its function is as follows. Catalyzes the 2-thiolation of uridine at the wobble position (U34) of tRNA, leading to the formation of s(2)U34. This Bordetella avium (strain 197N) protein is tRNA-specific 2-thiouridylase MnmA.